The chain runs to 583 residues: CTP synthase (583 aa).

Residues 1–278 (MRKHPQTATK…DAYVVRRLNL (278 aa)) are amidoligase domain. Serine 20 is a CTP binding site. Serine 20 lines the UTP pocket. ATP-binding positions include 21–26 (SLGKGL) and aspartate 78. The Mg(2+) site is built by aspartate 78 and glutamate 152. Residues 159 to 161 (DIE), 199 to 204 (KTKPTQ), and lysine 235 each bind CTP. UTP contacts are provided by residues 199-204 (KTKPTQ) and lysine 235. Residues 303 to 551 (RIALVGKYVE…VGAAMDYKAG (249 aa)) form the Glutamine amidotransferase type-1 domain. L-glutamine is bound at residue glycine 366. The active-site Nucleophile; for glutamine hydrolysis is the cysteine 393. Residues 394–397 (LGLQ), glutamate 416, and arginine 477 each bind L-glutamine. Residues histidine 524 and glutamate 526 contribute to the active site. Residues 560–583 (EQSSNGIQHRDSAARPIPEPAARG) are disordered.

The protein belongs to the CTP synthase family. In terms of assembly, homotetramer.

The catalysed reaction is UTP + L-glutamine + ATP + H2O = CTP + L-glutamate + ADP + phosphate + 2 H(+). It carries out the reaction L-glutamine + H2O = L-glutamate + NH4(+). The enzyme catalyses UTP + NH4(+) + ATP = CTP + ADP + phosphate + 2 H(+). Its pathway is pyrimidine metabolism; CTP biosynthesis via de novo pathway; CTP from UDP: step 2/2. Allosterically activated by GTP, when glutamine is the substrate; GTP has no effect on the reaction when ammonia is the substrate. The allosteric effector GTP functions by stabilizing the protein conformation that binds the tetrahedral intermediate(s) formed during glutamine hydrolysis. Inhibited by the product CTP, via allosteric rather than competitive inhibition. In terms of biological role, catalyzes the ATP-dependent amination of UTP to CTP with either L-glutamine or ammonia as the source of nitrogen. Regulates intracellular CTP levels through interactions with the four ribonucleotide triphosphates. In Mycolicibacterium paratuberculosis (strain ATCC BAA-968 / K-10) (Mycobacterium paratuberculosis), this protein is CTP synthase.